Reading from the N-terminus, the 45-residue chain is Bomanin Short 2 (45 aa).

An N-terminal signal peptide occupies residues 1-20 (MKFFSVVTVFVFGLLALANA). A propeptide spans 21 to 27 (VPLSPDP) (removed by a dipeptidylpeptidase). A disulfide bond links Cys-36 and Cys-39. The residue at position 43 (Gly-43) is a Glycine amide.

In terms of tissue distribution, hemolymph (at protein level).

Its subcellular location is the secreted. Its function is as follows. Secreted immune-induced peptide induced by Toll signaling. Has a role in resistance to bacterial and fungal infections. The protein is Bomanin Short 2 of Drosophila melanogaster (Fruit fly).